Reading from the N-terminus, the 293-residue chain is ATP synthase gamma chain (293 aa).

Belongs to the ATPase gamma chain family. In terms of assembly, F-type ATPases have 2 components, CF(1) - the catalytic core - and CF(0) - the membrane proton channel. CF(1) has five subunits: alpha(3), beta(3), gamma(1), delta(1), epsilon(1). CF(0) has three main subunits: a, b and c.

Its subcellular location is the cell inner membrane. Functionally, produces ATP from ADP in the presence of a proton gradient across the membrane. The gamma chain is believed to be important in regulating ATPase activity and the flow of protons through the CF(0) complex. The polypeptide is ATP synthase gamma chain (Beijerinckia indica subsp. indica (strain ATCC 9039 / DSM 1715 / NCIMB 8712)).